We begin with the raw amino-acid sequence, 921 residues long: Short transient receptor potential channel 3 (921 aa).

Positions 1–73 are disordered; it reads MSTKVRKCKE…PPFSHGPDLS (73 aa). The Cytoplasmic segment spans residues 1–459; the sequence is MSTKVRKCKE…KILRSPFMKF (459 aa). Residues 19–31 show a composition bias toward acidic residues; that stretch reads PEEEEDEGEDEGA. ANK repeat units follow at residues 111-140, 146-175, 177-203, and 232-261; these read AEEERFLDAAEYGNIPVVRKMLEESKTLNV, MGQNALQLAVGNEHLEVTELLLKKENLARI, DALLLAISKGYVRIVEAILNHPGFAAS, and PDITPIILAAHCQKYEVVHMLLMKGARIER. Glutamate 158 is a Ca(2+) binding site. A helical membrane pass occupies residues 460 to 477; the sequence is VAHAASFIIFLGLLVFNA. The Extracellular segment spans residues 478–508; it reads SDRFEGITTLPNITVTDYPKQIFRVKTTQFT. Residue asparagine 489 is glycosylated (N-linked (GlcNAc...) asparagine). Residues 509 to 527 traverse the membrane as a helical segment; it reads WTEMLIMVWVLGMMWSECK. Positions 525, 528, and 543 each coordinate Ca(2+). Topologically, residues 528–540 are cytoplasmic; it reads ELWLEGPREYILQ. A helical membrane pass occupies residues 541–562; that stretch reads LWNVLDFGMLSIFIAAFTARFL. The Extracellular portion of the chain corresponds to 563–606; that stretch reads AFLQATKAQQYVDSYVQESDLSEVTLPPEIQYFTYARDKWLPSD. Residues 607-630 traverse the membrane as a helical segment; that stretch reads PQIISEGLYAIAVVLSFSRIAYIL. Residues 631-649 lie on the Cytoplasmic side of the membrane; that stretch reads PANESFGPLQISLGRTVKD. The ANK 5 repeat unit spans residues 634 to 663; that stretch reads ESFGPLQISLGRTVKDIFKFMVLFIMVFFA. Residues 650–673 form a helical membrane-spanning segment; that stretch reads IFKFMVLFIMVFFAFMIGMFILYS. Topologically, residues 674-713 are extracellular; that stretch reads YYLGAKVNAAFTTVEESFKTLFWSIFGLSEVTSVVLKYDH. The chain crosses the membrane as a helical span at residues 714–739; that stretch reads KFIENIGYVLYGIYNVTMVVVLLNML. At 740–921 the chain is on the cytoplasmic side; the sequence is IAMINSSYQE…KLNPSMLRCE (182 aa). The segment at 850–870 is binds to IP3R3; it reads QIMKRLIKRYVLKAQVDKEND. Residues glutamate 871, glutamate 874, glutamate 876, and aspartate 883 each contribute to the Ca(2+) site.

The protein belongs to the transient receptor (TC 1.A.4) family. STrpC subfamily. TRPC3 sub-subfamily. Homotetramer. Interacts with ITPR1. Interacts with ITPR3. Interacts with MX1. Interacts with RNF24. Interacts with JPH2; the interaction is involved in maintaining Ca(2+) homeostasis in skeletal muscle and is mediated by JPH2 'Ser-165' phosphorylation. In terms of assembly, interacts with isoform short of TRPC1. As to expression, expressed predominantly in brain and at much lower levels in ovary, colon, small intestine, lung, prostate, placenta and testis.

The protein resides in the cell membrane. It catalyses the reaction Ca(2+)(in) = Ca(2+)(out). Its activity is regulated as follows. Activated by diacylglycerol (DAG) in a membrane-delimited fashion, independently of protein kinase C. Activated by inositol 1,4,5-triphosphate receptors (ITPR) with bound IP3. May be activated by internal calcium store depletion. Inhibited by intracellular Ca(2+). Its function is as follows. Forms a receptor-activated non-selective calcium permeant cation channel. In terms of biological role, forms a receptor-activated non-selective calcium permeant cation channel. May be operated by a phosphatidylinositol second messenger system activated by receptor tyrosine kinases or G-protein coupled receptors. This is Short transient receptor potential channel 3 (TRPC3) from Homo sapiens (Human).